A 577-amino-acid polypeptide reads, in one-letter code: 2-succinyl-5-enolpyruvyl-6-hydroxy-3-cyclohexene-1-carboxylate synthase (577 aa).

The protein belongs to the TPP enzyme family. MenD subfamily. As to quaternary structure, homodimer. It depends on Mg(2+) as a cofactor. Mn(2+) serves as cofactor. Thiamine diphosphate is required as a cofactor.

The catalysed reaction is isochorismate + 2-oxoglutarate + H(+) = 5-enolpyruvoyl-6-hydroxy-2-succinyl-cyclohex-3-ene-1-carboxylate + CO2. It functions in the pathway quinol/quinone metabolism; 1,4-dihydroxy-2-naphthoate biosynthesis; 1,4-dihydroxy-2-naphthoate from chorismate: step 2/7. Its pathway is quinol/quinone metabolism; menaquinone biosynthesis. Its function is as follows. Catalyzes the thiamine diphosphate-dependent decarboxylation of 2-oxoglutarate and the subsequent addition of the resulting succinic semialdehyde-thiamine pyrophosphate anion to isochorismate to yield 2-succinyl-5-enolpyruvyl-6-hydroxy-3-cyclohexene-1-carboxylate (SEPHCHC). The protein is 2-succinyl-5-enolpyruvyl-6-hydroxy-3-cyclohexene-1-carboxylate synthase of Christiangramia forsetii (strain DSM 17595 / CGMCC 1.15422 / KT0803) (Gramella forsetii).